The following is an 85-amino-acid chain: Putative membrane protein insertion efficiency factor (85 aa).

Residues 66-85 form a disordered region; the sequence is PLNSGGDDPVPPKLDDNREH.

Belongs to the UPF0161 family.

The protein resides in the cell inner membrane. In terms of biological role, could be involved in insertion of integral membrane proteins into the membrane. This Yersinia pestis bv. Antiqua (strain Antiqua) protein is Putative membrane protein insertion efficiency factor.